The following is a 294-amino-acid chain: Homeobox protein HD1 (294 aa).

The 21-residue stretch at 197–217 (ELKLELKQGFKSRIEDVREEI) folds into the ELK domain. The segment at residues 218 to 281 (MRKRRAGKLP…NQRKRNWHNN (64 aa)) is a DNA-binding region (homeobox; TALE-type).

The protein belongs to the TALE/KNOX homeobox family. In terms of tissue distribution, in roots, stems and cotyledons of one-week old seedlings. In mature plants, in young leaves from first level below flowers as well as in flower buds and open flowers.

Its subcellular location is the nucleus. Functionally, possible developmental regulator. This chain is Homeobox protein HD1 (HD1), found in Brassica napus (Rape).